The primary structure comprises 226 residues: PKHD-type hydroxylase PSPA7_5129 (226 aa).

Positions 78 to 178 (KVFPPLFNCY…RYASFFWTQS (101 aa)) constitute a Fe2OG dioxygenase domain. Residues His-96, Asp-98, and His-159 each contribute to the Fe cation site. Arg-169 lines the 2-oxoglutarate pocket.

Fe(2+) serves as cofactor. Requires L-ascorbate as cofactor.

In Pseudomonas paraeruginosa (strain DSM 24068 / PA7) (Pseudomonas aeruginosa (strain PA7)), this protein is PKHD-type hydroxylase PSPA7_5129.